Reading from the N-terminus, the 182-residue chain is Adenine phosphoribosyltransferase (182 aa).

The protein belongs to the purine/pyrimidine phosphoribosyltransferase family. Homodimer.

The protein resides in the cytoplasm. The catalysed reaction is AMP + diphosphate = 5-phospho-alpha-D-ribose 1-diphosphate + adenine. Its pathway is purine metabolism; AMP biosynthesis via salvage pathway; AMP from adenine: step 1/1. In terms of biological role, catalyzes a salvage reaction resulting in the formation of AMP, that is energically less costly than de novo synthesis. The polypeptide is Adenine phosphoribosyltransferase (Campylobacter concisus (strain 13826)).